The following is a 559-amino-acid chain: Chaperonin GroEL 3 (559 aa).

Residues Asp88–Thr92, Gly426, and Asp507 contribute to the ATP site.

Belongs to the chaperonin (HSP60) family. As to quaternary structure, forms a cylinder of 14 subunits composed of two heptameric rings stacked back-to-back. Interacts with the co-chaperonin GroES.

The protein resides in the cytoplasm. It catalyses the reaction ATP + H2O + a folded polypeptide = ADP + phosphate + an unfolded polypeptide.. Functionally, together with its co-chaperonin GroES, plays an essential role in assisting protein folding. The GroEL-GroES system forms a nano-cage that allows encapsulation of the non-native substrate proteins and provides a physical environment optimized to promote and accelerate protein folding. The sequence is that of Chaperonin GroEL 3 from Methylococcus capsulatus (strain ATCC 33009 / NCIMB 11132 / Bath).